The chain runs to 130 residues: Iron-sulfur cluster insertion protein ErpA (130 aa).

The iron-sulfur cluster site is built by C58, C122, and C124.

Belongs to the HesB/IscA family. As to quaternary structure, homodimer. Iron-sulfur cluster is required as a cofactor.

Required for insertion of 4Fe-4S clusters for at least IspG. The sequence is that of Iron-sulfur cluster insertion protein ErpA from Stenotrophomonas maltophilia (strain K279a).